The sequence spans 319 residues: ATP-dependent 6-phosphofructokinase (319 aa).

Gly11 is an ATP binding site. 21–25 (RAVVR) contacts ADP. Residues 72–73 (RY) and 102–105 (GDGS) contribute to the ATP site. Asp103 is a Mg(2+) binding site. Residue 125–127 (TID) coordinates substrate. Asp127 acts as the Proton acceptor in catalysis. Arg154 is an ADP binding site. Substrate-binding positions include Arg162 and 169 to 171 (MGR). ADP-binding positions include 185-187 (GAE), Arg211, and 213-215 (KKH). Substrate is bound by residues Glu222, Arg243, and 249-252 (HVQR).

This sequence belongs to the phosphofructokinase type A (PFKA) family. ATP-dependent PFK group I subfamily. Prokaryotic clade 'B1' sub-subfamily. In terms of assembly, homotetramer. The cofactor is Mg(2+).

It is found in the cytoplasm. It catalyses the reaction beta-D-fructose 6-phosphate + ATP = beta-D-fructose 1,6-bisphosphate + ADP + H(+). The protein operates within carbohydrate degradation; glycolysis; D-glyceraldehyde 3-phosphate and glycerone phosphate from D-glucose: step 3/4. Its activity is regulated as follows. Allosterically activated by ADP and other diphosphonucleosides, and allosterically inhibited by phosphoenolpyruvate. Its function is as follows. Catalyzes the phosphorylation of D-fructose 6-phosphate to fructose 1,6-bisphosphate by ATP, the first committing step of glycolysis. This Listeria innocua serovar 6a (strain ATCC BAA-680 / CLIP 11262) protein is ATP-dependent 6-phosphofructokinase.